A 215-amino-acid polypeptide reads, in one-letter code: UPF0502 protein YceH (215 aa).

It belongs to the UPF0502 family.

This chain is UPF0502 protein YceH, found in Salmonella heidelberg (strain SL476).